The sequence spans 867 residues: Retinoblastoma-related protein 1 (867 aa).

The segment at 275–476 is domain A; that stretch reads TPVTSAMTTA…EKGSSLYNSL (202 aa). A pocket; binds RPD3I and RBAP1 region spans residues 275-722; the sequence is TPVTSAMTTA…NEVFVPAAKP (448 aa). The segment at 477 to 594 is spacer; that stretch reads IVARPSVASE…PVGGNEKCAD (118 aa). The disordered stretch occupies residues 512–563; that stretch reads EGLPATPSKKRAAGPDDNADPRSPKRSCNESRNTVVERNLQTPPPKQSHMVS. Positions 530–540 are enriched in basic and acidic residues; it reads ADPRSPKRSCN. Residues 541–552 are compositionally biased toward polar residues; sequence ESRNTVVERNLQ. The interval 595 to 722 is domain B; it reads VTIHIFFSKI…NEVFVPAAKP (128 aa). Disordered stretches follow at residues 734–762 and 843–867; these read PEDK…MSPK and QING…ETDT.

It belongs to the retinoblastoma protein (RB) family. In terms of assembly, interacts with RPD3I, RBAP1, the Arabidopsis cyclin CYCD3-1, the mastrevirus replication-associated protein A (RepA) and the begomovirus replication-associated protein (Rep). In terms of tissue distribution, ubiquitous.

The protein localises to the nucleus. Functionally, regulator of biological processes that recruits a histone deacetylase to control gene transcription. May play a role in the entry into mitosis, negatively regulating the cell proliferation. Formation of stable complexes with geminiviridae replication-associated proteins may create a cellular environment which favors viral DNA replication. The sequence is that of Retinoblastoma-related protein 1 (RBR1) from Zea mays (Maize).